Reading from the N-terminus, the 316-residue chain is MIKLGIVMDPIANINIKKDSSFAMLLEAQRRGYELHYMEMGDLYLINGEARAHTRTLNVKQNYEEWFSFVGEQDLPLADLDVILMRKDPPFDTEFIYATYILERAEEKGTLIVNKPQSLRDCNEKLFTAWFSDLTPETLVTRNKAQLKAFWEKHSDIILKPLDGMGGASIFRVKEGDPNLGVIAETLTEHGTRYCMAQNYLPAIKDGDKRVLVVDGEPVPYCLARIPQGGETRGNLAAGGRGEPRPLTESDWKIARQIGPTLKEKGLIFVGLDIIGDRLTEINVTSPTCIREIEAEFPVSITGMLMDAIEARLQQQ.

The ATP-grasp domain occupies 125–310 (KLFTAWFSDL…ITGMLMDAIE (186 aa)). Residue 151 to 207 (WEKHSDIILKPLDGMGGASIFRVKEGDPNLGVIAETLTEHGTRYCMAQNYLPAIKDG) coordinates ATP. 2 residues coordinate Mg(2+): E281 and N283.

The protein belongs to the prokaryotic GSH synthase family. Homotetramer. The cofactor is Mg(2+). Mn(2+) is required as a cofactor.

It carries out the reaction gamma-L-glutamyl-L-cysteine + glycine + ATP = glutathione + ADP + phosphate + H(+). The protein operates within sulfur metabolism; glutathione biosynthesis; glutathione from L-cysteine and L-glutamate: step 2/2. With respect to regulation, inhibited by 7,8-dihydrofolate, methotrexate and trimethoprim. The protein is Glutathione synthetase (gshB) of Escherichia coli (strain K12).